A 148-amino-acid chain; its full sequence is Large ribosomal subunit protein bL9 (148 aa).

It belongs to the bacterial ribosomal protein bL9 family.

In terms of biological role, binds to the 23S rRNA. This Chromohalobacter salexigens (strain ATCC BAA-138 / DSM 3043 / CIP 106854 / NCIMB 13768 / 1H11) protein is Large ribosomal subunit protein bL9.